The following is a 137-amino-acid chain: uncharacterized protein (137 aa).

Residues 4–21 (ISWQIVLAVIGVVAGFII) form a helical membrane-spanning segment.

The protein resides in the membrane. This is an uncharacterized protein from Archaeoglobus fulgidus (strain ATCC 49558 / DSM 4304 / JCM 9628 / NBRC 100126 / VC-16).